The primary structure comprises 171 residues: Shikimate kinase (171 aa).

Position 14 to 19 (14 to 19 (GAGKST)) interacts with ATP. Residue S18 participates in Mg(2+) binding. Substrate-binding residues include D36, R60, and G82. R120 contacts ATP. R139 is a binding site for substrate. Q156 serves as a coordination point for ATP.

The protein belongs to the shikimate kinase family. In terms of assembly, monomer. Mg(2+) is required as a cofactor.

The protein localises to the cytoplasm. The catalysed reaction is shikimate + ATP = 3-phosphoshikimate + ADP + H(+). It participates in metabolic intermediate biosynthesis; chorismate biosynthesis; chorismate from D-erythrose 4-phosphate and phosphoenolpyruvate: step 5/7. Functionally, catalyzes the specific phosphorylation of the 3-hydroxyl group of shikimic acid using ATP as a cosubstrate. This Shewanella loihica (strain ATCC BAA-1088 / PV-4) protein is Shikimate kinase.